Consider the following 101-residue polypeptide: MKYEKLEPAAIDETVAGLVGWTLAADRLSISKSYKFRNFVEAFGFMTEAALTAEKLNHHPEWFNVYSRVDVKLTTHDANGLTDHDVKLAKAMEKAAARRAD.

It belongs to the pterin-4-alpha-carbinolamine dehydratase family.

It catalyses the reaction (4aS,6R)-4a-hydroxy-L-erythro-5,6,7,8-tetrahydrobiopterin = (6R)-L-erythro-6,7-dihydrobiopterin + H2O. This Rhizobium rhizogenes (strain K84 / ATCC BAA-868) (Agrobacterium radiobacter) protein is Putative pterin-4-alpha-carbinolamine dehydratase.